The sequence spans 364 residues: MDFFYIGVMSGSSLDGIDIALLKQDDRSRLLATHYIPMPEDLHAELLGLCSSGADELARAAIAEQKWCRLVAQGVQTLLQDQNMVPAQIRAIGSHGQTIRHEPSRGYSIQIGNPALLAELTEITVVSDFRRRDIAAGGQGAPLVPAFHEALFDDNKDHRAVLNIGGFSNLSLIESDRPVEGFDCGPGNVLLDAWISSQLHESYDKDGAWSASGKVDSALLQKLLSDQFFLTKGPKSTGREVFNLGWVKHHLFQSKTLAPEDVQATLLELTALTITDSLKSAQPITRELLVCGGGAHNKALMKRLAELLPDTEVSSTEKFGVNPDWVEAMAFAWLAHCCLEGVPANRPTVTGAKGRRVLGAIYPA.

Residue 11 to 18 (GSSLDGID) coordinates ATP.

It belongs to the anhydro-N-acetylmuramic acid kinase family.

The enzyme catalyses 1,6-anhydro-N-acetyl-beta-muramate + ATP + H2O = N-acetyl-D-muramate 6-phosphate + ADP + H(+). Its pathway is amino-sugar metabolism; 1,6-anhydro-N-acetylmuramate degradation. The protein operates within cell wall biogenesis; peptidoglycan recycling. Catalyzes the specific phosphorylation of 1,6-anhydro-N-acetylmuramic acid (anhMurNAc) with the simultaneous cleavage of the 1,6-anhydro ring, generating MurNAc-6-P. Is required for the utilization of anhMurNAc either imported from the medium or derived from its own cell wall murein, and thus plays a role in cell wall recycling. This chain is Anhydro-N-acetylmuramic acid kinase, found in Pseudomonas syringae pv. syringae (strain B728a).